Consider the following 247-residue polypeptide: Cytochrome c oxidase subunit 2 (247 aa).

The Mitochondrial intermembrane portion of the chain corresponds to 12–38 (DVPTPWGLYFQDSSTPNQEGIIELHDN). The chain crosses the membrane as a helical span at residues 39 to 59 (IMFYLVLILCTVSWLLFSIVK). Residues 60–78 (DSSKNPLPHKYLVHGQTIE) lie on the Mitochondrial matrix side of the membrane. Residues 79–101 (IIWTILPAVVLLIIAFPSFILLY) form a helical membrane-spanning segment. The Mitochondrial intermembrane portion of the chain corresponds to 102–247 (LCDEVISPAM…KEFLTWLNEQ (146 aa)). Positions 182, 217, 219, 221, 225, and 228 each coordinate Cu cation. Glu219 lines the Mg(2+) pocket.

The protein belongs to the cytochrome c oxidase subunit 2 family. Component of the cytochrome c oxidase (complex IV, CIV), a multisubunit enzyme composed of a catalytic core of 3 subunits and several supernumerary subunits. The complex exists as a monomer or a dimer and forms supercomplexes (SCs) in the inner mitochondrial membrane with ubiquinol-cytochrome c oxidoreductase (cytochrome b-c1 complex, complex III, CIII). The cofactor is Cu cation. The signal sequence of COX2 is processed by IMP1.

The protein localises to the mitochondrion inner membrane. It carries out the reaction 4 Fe(II)-[cytochrome c] + O2 + 8 H(+)(in) = 4 Fe(III)-[cytochrome c] + 2 H2O + 4 H(+)(out). In terms of biological role, component of the cytochrome c oxidase, the last enzyme in the mitochondrial electron transport chain which drives oxidative phosphorylation. The respiratory chain contains 3 multisubunit complexes succinate dehydrogenase (complex II, CII), ubiquinol-cytochrome c oxidoreductase (cytochrome b-c1 complex, complex III, CIII) and cytochrome c oxidase (complex IV, CIV), that cooperate to transfer electrons derived from NADH and succinate to molecular oxygen, creating an electrochemical gradient over the inner membrane that drives transmembrane transport and the ATP synthase. Cytochrome c oxidase is the component of the respiratory chain that catalyzes the reduction of oxygen to water. Electrons originating from reduced cytochrome c in the intermembrane space (IMS) are transferred via the dinuclear copper A center (CU(A)) of subunit 2 and heme A of subunit 1 to the active site in subunit 1, a binuclear center (BNC) formed by heme A3 and copper B (CU(B)). The BNC reduces molecular oxygen to 2 water molecules using 4 electrons from cytochrome c in the IMS and 4 protons from the mitochondrial matrix. This is Cytochrome c oxidase subunit 2 (COX2) from Cyberlindnera mrakii (Yeast).